A 1054-amino-acid chain; its full sequence is SMC5-SMC6 complex localization factor protein 1 (1054 aa).

2 BRCT domains span residues 2-80 (EDSA…AKSG) and 121-199 (PGAF…LLEK). Residues 283 to 303 (RHGLENQKETKKKDKNIQRSY) form a disordered region. Over residues 284–299 (HGLENQKETKKKDKNI) the composition is skewed to basic and acidic residues. Positions 407–1054 (PRGILNLIEN…MMCQSITELS (648 aa)) are NSE5-like domain; mediates interaction with SLF2. 3 ANK repeats span residues 802–832 (KGET…DINV), 836–865 (AGWT…EVDL), and 870–900 (DGVT…ELLQ).

In terms of assembly, interacts (via BRCT domains) with RAD18 (via C-terminus and phosphorylated form); this interaction is required for efficient repair of UV-induced DNA damage. Interacts (via N-terminus) with SLF2; this interaction links RAD18 to the SMC5-SMC6 complex. Interacts (via BRCT domains) with RAD18; this interaction occurs in a SLF2-independent manner. Interacts with SMC6. Widely expressed. Expressed in testis. Expressed in spermatocytes.

Its subcellular location is the nucleus. It is found in the cytoplasm. The protein localises to the cytoskeleton. The protein resides in the microtubule organizing center. It localises to the centrosome. Its function is as follows. Plays a role in the DNA damage response (DDR) pathway by regulating postreplication repair of UV-damaged DNA and genomic stability maintenance. The SLF1-SLF2 complex acts to link RAD18 with the SMC5-SMC6 complex at replication-coupled interstrand cross-links (ICL) and DNA double-strand breaks (DSBs) sites on chromatin during DNA repair in response to stalled replication forks. Promotes the recruitment of SLF2 and the SMC5-SMC6 complex to DNA lesions. This Mus musculus (Mouse) protein is SMC5-SMC6 complex localization factor protein 1.